The following is a 398-amino-acid chain: Ribosomal RNA large subunit methyltransferase F (398 aa).

Basic residues predominate over residues 1–12; sequence MTPSRKPARPGA. The interval 1-85 is disordered; the sequence is MTPSRKPARP…RNLHGQGYDF (85 aa). Composition is skewed to low complexity over residues 20–40 and 48–59; these read PSAKASRPKPSSQSKSKAQPK and QAKSQAKPQAKS.

Belongs to the methyltransferase superfamily. METTL16/RlmF family.

It localises to the cytoplasm. It catalyses the reaction adenosine(1618) in 23S rRNA + S-adenosyl-L-methionine = N(6)-methyladenosine(1618) in 23S rRNA + S-adenosyl-L-homocysteine + H(+). Its function is as follows. Specifically methylates the adenine in position 1618 of 23S rRNA. The chain is Ribosomal RNA large subunit methyltransferase F from Shewanella loihica (strain ATCC BAA-1088 / PV-4).